A 394-amino-acid chain; its full sequence is Elongation factor Tu 2 (394 aa).

The region spanning 10–204 (KPHVNVGTIG…FLDSYIPEPE (195 aa)) is the tr-type G domain. The G1 stretch occupies residues 19–26 (GHVDHGKT). 19-26 (GHVDHGKT) contributes to the GTP binding site. A Mg(2+)-binding site is contributed by Thr26. A G2 region spans residues 60–64 (GITIN). The segment at 81–84 (DCPG) is G3. Residues 81 to 85 (DCPGH) and 136 to 139 (NKCD) contribute to the GTP site. Residues 136–139 (NKCD) are G4. The tract at residues 174 to 176 (SAL) is G5.

Belongs to the TRAFAC class translation factor GTPase superfamily. Classic translation factor GTPase family. EF-Tu/EF-1A subfamily. As to quaternary structure, monomer.

Its subcellular location is the cytoplasm. The enzyme catalyses GTP + H2O = GDP + phosphate + H(+). GTP hydrolase that promotes the GTP-dependent binding of aminoacyl-tRNA to the A-site of ribosomes during protein biosynthesis. In Shigella flexneri serotype 5b (strain 8401), this protein is Elongation factor Tu 2.